Reading from the N-terminus, the 85-residue chain is 4-hydroxyphenylacetate decarboxylase small subunit (85 aa).

[4Fe-4S] cluster-binding residues include histidine 4, cysteine 7, cysteine 20, cysteine 34, cysteine 43, cysteine 46, cysteine 60, and cysteine 78.

It belongs to the HPA decarboxylase small subunit family. As to quaternary structure, heterooctamer consisting of 4 large (HpdB) subunits and 4 small (HpdC) subunits, arranged as a tetramer of heterodimers. [4Fe-4S] cluster serves as cofactor.

It catalyses the reaction 4-hydroxyphenylacetate + H(+) = 4-methylphenol + CO2. It carries out the reaction 3,4-dihydroxyphenylacetate + H(+) = 4-methylcatechol + CO2. Its function is as follows. Component of the HPA decarboxylase that decarboxylates phenylacetates with a hydroxyl group in the p-position. Active toward 4-hydroxyphenylacetate and 3,4-dihydroxyphenylacetate, forming 4-methylphenol and 4-methylcatechol, respectively. Is likely involved in the catabolism of aromatic amino acids such as tyrosine fermentation. 4-methylphenol (p-cresol) formation provides metabolic toxicity, which allows an active suppression of other microbes and may provide growth advantages for the producers in highly competitive environments. The small subunit is essential for enzymatic activity of HPA decarboxylase, and also seems to be involved in the regulation of the enzyme oligomeric state and catalytic activity. This is 4-hydroxyphenylacetate decarboxylase small subunit from Clostridioides difficile (strain 630) (Peptoclostridium difficile).